The following is a 563-amino-acid chain: Light-independent protochlorophyllide reductase subunit B (563 aa).

Position 36 (Asp36) interacts with [4Fe-4S] cluster. Asp349 serves as the catalytic Proton donor. 484–485 (GM) serves as a coordination point for substrate.

The protein belongs to the ChlB/BchB/BchZ family. As to quaternary structure, protochlorophyllide reductase is composed of three subunits; ChlL, ChlN and ChlB. Forms a heterotetramer of two ChlB and two ChlN subunits. [4Fe-4S] cluster is required as a cofactor.

It is found in the plastid. The protein localises to the chloroplast. It carries out the reaction chlorophyllide a + oxidized 2[4Fe-4S]-[ferredoxin] + 2 ADP + 2 phosphate = protochlorophyllide a + reduced 2[4Fe-4S]-[ferredoxin] + 2 ATP + 2 H2O. Its pathway is porphyrin-containing compound metabolism; chlorophyll biosynthesis (light-independent). Functionally, component of the dark-operative protochlorophyllide reductase (DPOR) that uses Mg-ATP and reduced ferredoxin to reduce ring D of protochlorophyllide (Pchlide) to form chlorophyllide a (Chlide). This reaction is light-independent. The NB-protein (ChlN-ChlB) is the catalytic component of the complex. This chain is Light-independent protochlorophyllide reductase subunit B, found in Chlamydomonas moewusii (Chlamydomonas eugametos).